Consider the following 727-residue polypeptide: Cadmium-transporting ATPase (727 aa).

The region spanning 12-75 (EMNVYRVQGF…AGAFENLKVS (64 aa)) is the HMA domain. Cd(2+)-binding residues include Cys23 and Cys26. Helical transmembrane passes span 106-126 (STLL…FVNG), 130-150 (LVTS…LFKV), 171-191 (IGAT…LFAI), 336-356 (IIMV…GGSW), and 364-384 (LAVL…ISIV). Asp415 acts as the 4-aspartylphosphate intermediate in catalysis. 2 helical membrane-spanning segments follow: residues 672 to 694 (LNII…LLVI) and 699 to 721 (TLWI…SLRL).

The protein belongs to the cation transport ATPase (P-type) (TC 3.A.3) family. Type IB subfamily.

The protein localises to the cell membrane. It catalyses the reaction Cd(2+)(in) + ATP + H2O = Cd(2+)(out) + ADP + phosphate + H(+). Inhibited by the antibiotic bafilomycin A1. Partially inhibited by DCCD, nigericin and FCCP. Its function is as follows. Couples the hydrolysis of ATP with the export of cadmium. Involved in cadmium resistance. The polypeptide is Cadmium-transporting ATPase (Staphylococcus aureus).